A 780-amino-acid polypeptide reads, in one-letter code: RNA-binding protein Pasilla (780 aa).

Disordered stretches follow at residues 31–50, 76–113, and 150–190; these read LQHQ…QQLE, QPRH…SSSI, and QIES…ATAS. Low complexity-rich tracts occupy residues 79–91, 99–113, and 176–190; these read HSTT…STHS, SSNS…SSSI, and PNGT…ATAS. 3 consecutive KH domains span residues 273 to 340, 366 to 432, and 691 to 758; these read TYHM…MEFI, DKQV…CKMI, and KDSK…QYLI. The segment at 674–693 is disordered; that stretch reads AQLGGLSKSPTPGDLSSKDS. Positions 686–776 are required for RNA binding; it reads GDLSSKDSKN…TKRARQIPLT (91 aa).

In terms of tissue distribution, expressed in the central nervous system in mushroom body neurons (at protein level).

The protein localises to the nucleus. The protein resides in the cytoplasm. Functionally, functions to regulate alternative splicing in neurons by binding pre-mRNA in a sequence-specific manner to activate exon inclusion. Plays a role in long-term memory formation by processing the unspliced Orb2-isoform A (Orb2A) mRNA and thereby controlling Orb2A protein abundance. This chain is RNA-binding protein Pasilla, found in Drosophila melanogaster (Fruit fly).